Here is a 172-residue protein sequence, read N- to C-terminus: Translation initiation factor IF-3 (172 aa).

Belongs to the IF-3 family. In terms of assembly, monomer.

It localises to the cytoplasm. In terms of biological role, IF-3 binds to the 30S ribosomal subunit and shifts the equilibrium between 70S ribosomes and their 50S and 30S subunits in favor of the free subunits, thus enhancing the availability of 30S subunits on which protein synthesis initiation begins. The protein is Translation initiation factor IF-3 of Sulfurimonas denitrificans (strain ATCC 33889 / DSM 1251) (Thiomicrospira denitrificans (strain ATCC 33889 / DSM 1251)).